The following is a 907-amino-acid chain: Catenin alpha-1 (907 aa).

Thr-2 carries the post-translational modification N-acetylthreonine. The segment at 2–228 is involved in homodimerization; that stretch reads TAVHAGNINF…PILYTASQAC (227 aa). Lys-57 is covalently cross-linked (Glycyl lysine isopeptide (Lys-Gly) (interchain with G-Cter in SUMO2)). The interval 97–148 is interaction with JUP and CTNNB1; sequence VRKQGDLMKSAAGEFADDPCSSVKRGNMVRAARALLSAVTRLLILADMADVY. 4 positions are modified to phosphoserine: Ser-264, Ser-268, Ser-296, and Ser-298. The tract at residues 326–395 is interaction with alpha-actinin; that stretch reads TRDDRRERIV…AVMDHVSDSF (70 aa). Thr-635 bears the Phosphothreonine mark. A Phosphoserine modification is found at Ser-642. A Phosphothreonine modification is found at Thr-646. Residues Ser-653 and Ser-656 each carry the phosphoserine modification. Thr-659 carries the phosphothreonine modification. Lys-798 participates in a covalent cross-link: Glycyl lysine isopeptide (Lys-Gly) (interchain with G-Cter in SUMO2). Ser-852 carries the phosphoserine modification. Residues 865–881 are compositionally biased toward basic and acidic residues; that stretch reads PEKKPLVKREKQDETQT. Positions 865–895 are disordered; that stretch reads PEKKPLVKREKQDETQTKIKRASQKKHVNPV. A compositionally biased stretch (basic residues) spans 882 to 892; it reads KIKRASQKKHV.

It belongs to the vinculin/alpha-catenin family. Monomer and homodimer; the monomer preferentially binds to CTNNB1 and the homodimer to actin. Component of an cadherin:catenin adhesion complex composed of at least of CDH26, beta-catenin/CTNNB1, alpha-catenin/CTNNA1 and p120 catenin/CTNND1. Possible component of an E-cadherin/ catenin adhesion complex together with E-cadherin/CDH1 and beta-catenin/CTNNB1 or gamma-catenin/JUP; the complex is located to adherens junctions. The stable association of CTNNA1 is controversial as CTNNA1 was shown not to bind to F-actin when assembled in the complex. Alternatively, the CTNNA1-containing complex may be linked to F-actin by other proteins such as LIMA1. Binds AFDN and F-actin. Interacts with ARHGAP21. Interacts with AJUBA. Interacts with LIMA1. Interacts with vinculin/VCL. Interacts with TJP2/ZO2 (via N-terminus). Interacts with TJP1/ZO1 (via N-terminus). In terms of processing, sumoylated. Post-translationally, phosphorylation seems to contribute to the strength of cell-cell adhesion rather than to the basic capacity for cell-cell adhesion.

The protein localises to the cytoplasm. It is found in the cytoskeleton. It localises to the cell junction. The protein resides in the adherens junction. Its subcellular location is the cell membrane. The protein localises to the nucleus. In terms of biological role, associates with the cytoplasmic domain of a variety of cadherins. The association of catenins to cadherins produces a complex which is linked to the actin filament network, and which seems to be of primary importance for cadherins cell-adhesion properties. Can associate with both E- and N-cadherins. Originally believed to be a stable component of E-cadherin/catenin adhesion complexes and to mediate the linkage of cadherins to the actin cytoskeleton at adherens junctions. In contrast, cortical actin was found to be much more dynamic than E-cadherin/catenin complexes and CTNNA1 was shown not to bind to F-actin when assembled in the complex suggesting a different linkage between actin and adherens junctions components. The homodimeric form may regulate actin filament assembly and inhibit actin branching by competing with the Arp2/3 complex for binding to actin filaments. Involved in the regulation of WWTR1/TAZ, YAP1 and TGFB1-dependent SMAD2 and SMAD3 nuclear accumulation. May play a crucial role in cell differentiation. This is Catenin alpha-1 from Oryctolagus cuniculus (Rabbit).